The following is a 632-amino-acid chain: Phosphomethylpyrimidine synthase (632 aa).

Residues 1–13 (MNIRSNPDTTLPA) show a composition bias toward polar residues. Positions 1-26 (MNIRSNPDTTLPAVTTGPLPSSRKIF) are disordered. Substrate contacts are provided by residues N221, M250, Y279, H315, 335–337 (SRG), 376–379 (DGLR), and E415. A Zn(2+)-binding site is contributed by H419. Y442 lines the substrate pocket. A Zn(2+)-binding site is contributed by H483. Positions 563, 566, and 571 each coordinate [4Fe-4S] cluster.

It belongs to the ThiC family. In terms of assembly, homodimer. [4Fe-4S] cluster is required as a cofactor.

The enzyme catalyses 5-amino-1-(5-phospho-beta-D-ribosyl)imidazole + S-adenosyl-L-methionine = 4-amino-2-methyl-5-(phosphooxymethyl)pyrimidine + CO + 5'-deoxyadenosine + formate + L-methionine + 3 H(+). It participates in cofactor biosynthesis; thiamine diphosphate biosynthesis. Functionally, catalyzes the synthesis of the hydroxymethylpyrimidine phosphate (HMP-P) moiety of thiamine from aminoimidazole ribotide (AIR) in a radical S-adenosyl-L-methionine (SAM)-dependent reaction. The chain is Phosphomethylpyrimidine synthase from Afipia carboxidovorans (strain ATCC 49405 / DSM 1227 / KCTC 32145 / OM5) (Oligotropha carboxidovorans).